We begin with the raw amino-acid sequence, 127 residues long: Large ribosomal subunit protein bL12 (127 aa).

This sequence belongs to the bacterial ribosomal protein bL12 family. As to quaternary structure, homodimer. Part of the ribosomal stalk of the 50S ribosomal subunit. Forms a multimeric L10(L12)X complex, where L10 forms an elongated spine to which 2 to 4 L12 dimers bind in a sequential fashion. Binds GTP-bound translation factors.

Functionally, forms part of the ribosomal stalk which helps the ribosome interact with GTP-bound translation factors. Is thus essential for accurate translation. The protein is Large ribosomal subunit protein bL12 of Sinorhizobium fredii (strain NBRC 101917 / NGR234).